We begin with the raw amino-acid sequence, 52 residues long: Ornatin-B (52 aa).

Positions 42–44 (RGD) match the Cell attachment site motif.

Belongs to the ornatin family.

The protein localises to the secreted. Potent inhibitor of fibrinogen interaction with platelet receptors expressed on glycoprotein IIb-IIIa complex. May prevent blood from clotting during either feeding and/or storage of ingested blood. This chain is Ornatin-B, found in Placobdella ornata (Turtle leech).